Consider the following 338-residue polypeptide: MSRRAKKDDFLRHYTVSDPRTHPKGYTEYKVTAQFISKKDPEDIKEVVVWKRYSDFRKLHGDLAYTHRNLFRRLEEFPAFPRAQVFGRFEASVIEERRKGAEDLLRFTVPIPALNNSPQLKEFFRGGEVTRPSEVSRDLQILPPPLIPTPPSDEARLLQPLPAERRGQEELEVPVDPLPSSPAQEALDLLFCCDSTEEASSSPARGPLSEAELALFDPYSKEESTGPSPTHTSELAAMEVQSKRLDQEPWEPGGREEEEAEDGDPAPAYLGQATELITQALRNEKAGAYAAALQGYQEGVHILLQGVSGDPSPTRREGVKKKAAEYLKRAETLHAHLP.

The PX domain occupies 1 to 131 (MSRRAKKDDF…EFFRGGEVTR (131 aa)). Positions 52, 54, 88, and 97 each coordinate a 1,2-diacyl-sn-glycero-3-phospho-(1D-myo-inositol-3-phosphate). Arginine 106 is modified (omega-N-methylarginine). Residues 134–155 (EVSRDLQILPPPLIPTPPSDEA) form a disordered region. Residues 142–151 (LPPPLIPTPP) show a composition bias toward pro residues. Phosphoserine occurs at positions 202 and 228. Residues 240 to 270 (VQSKRLDQEPWEPGGREEEEAEDGDPAPAYL) are disordered. The MIT domain occupies 266–338 (APAYLGQATE…RAETLHAHLP (73 aa)).

This sequence belongs to the sorting nexin family. In terms of assembly, homodimer. Interacts with SNX1, SNX2 and SNX4.

The protein resides in the cytoplasm. Its subcellular location is the membrane. The protein localises to the cytoplasmic vesicle membrane. May be involved in several stages of intracellular trafficking. Overexpression of SNX15 disrupts the normal trafficking of proteins from the plasma membrane to recycling endosomes or the TGN. This Rattus norvegicus (Rat) protein is Sorting nexin-15 (Snx15).